A 161-amino-acid polypeptide reads, in one-letter code: Cyclic pyranopterin monophosphate synthase (161 aa).

Substrate-binding positions include 75 to 77 and 113 to 114; these read LCH and ME. Asp-128 is a catalytic residue.

It belongs to the MoaC family. In terms of assembly, homohexamer; trimer of dimers.

It carries out the reaction (8S)-3',8-cyclo-7,8-dihydroguanosine 5'-triphosphate = cyclic pyranopterin phosphate + diphosphate. Its pathway is cofactor biosynthesis; molybdopterin biosynthesis. Functionally, catalyzes the conversion of (8S)-3',8-cyclo-7,8-dihydroguanosine 5'-triphosphate to cyclic pyranopterin monophosphate (cPMP). The sequence is that of Cyclic pyranopterin monophosphate synthase from Methylobacillus flagellatus (strain ATCC 51484 / DSM 6875 / VKM B-1610 / KT).